Reading from the N-terminus, the 351-residue chain is DNA polymerase IV (351 aa).

Residues 4-184 (FIHIDMDCFY…LPLGKIPGVG (181 aa)) form the UmuC domain. Mg(2+) contacts are provided by D8 and D102. E103 is an active-site residue.

It belongs to the DNA polymerase type-Y family. In terms of assembly, monomer. The cofactor is Mg(2+).

Its subcellular location is the cytoplasm. The catalysed reaction is DNA(n) + a 2'-deoxyribonucleoside 5'-triphosphate = DNA(n+1) + diphosphate. In terms of biological role, poorly processive, error-prone DNA polymerase involved in untargeted mutagenesis. Copies undamaged DNA at stalled replication forks, which arise in vivo from mismatched or misaligned primer ends. These misaligned primers can be extended by PolIV. Exhibits no 3'-5' exonuclease (proofreading) activity. May be involved in translesional synthesis, in conjunction with the beta clamp from PolIII. This Pseudoalteromonas translucida (strain TAC 125) protein is DNA polymerase IV.